Consider the following 294-residue polypeptide: MKIAAFDIGGTALKMGVVLPHGEIILTKSAEISGSDGDQILAEMKVFLAENTDVTGIAVSAPGYVNPKTGLITMGGAIRRFDNFNLKEWLEAETGLPVAIENDANCALLAEKWLGKGQDLDDFLCLTIGTGIGGGIFSNGELVRGGRFRAGEFGYMFSERPGAFRPGKYTLNETTTMLVLRRQYAELTGRPLEEITGEEIFANYDAHDAVSERLITEFYTGICTGLYNLIYLFDPTHIFIGGGITSRPTFIAELKHHMESFGLRDTIIETATHKNQAGLLGAVYHFLQEENRHE.

5–11 (AFDIGGT) is a binding site for ATP.

Belongs to the ROK (NagC/XylR) family.

It catalyses the reaction D-cellobiose + ATP = 6-phospho-beta-D-glucosyl-(1-&gt;4)-D-glucose + ADP + H(+). Functionally, catalyzes the ATP-dependent phosphorylation of cellobiose to produce cellobiose-6'-P. May have a dual role of kinase and transcriptional regulator of the cellobiose-PTS operon. The protein is Beta-glucoside kinase (bglK) of Listeria monocytogenes serovar 1/2a (strain ATCC BAA-679 / EGD-e).